The following is a 333-amino-acid chain: Glycogenin-1 (333 aa).

T2 bears the N-acetylthreonine mark. The UDP site is built by L9, T11, N12, and Y15. Residues L9, T11, N12, and Y15 each contribute to the UDP-alpha-D-glucose site. A Phosphoserine modification is found at S44. Residue R77 coordinates UDP. UDP-alpha-D-glucose-binding residues include R77, K86, D102, A103, D104, N133, S134, D160, D163, and Q164. UDP is bound by residues D102, A103, and D104. D102 contacts Mn(2+). D104 is a Mn(2+) binding site. O-linked (Glc...) tyrosine glycosylation is present at Y195. UDP-binding residues include H212, G215, and K218. A Mn(2+)-binding site is contributed by H212. The UDP-alpha-D-glucose site is built by G215 and K218. The interval 284 to 316 is interaction with GYS1; the sequence is SDLSFGEAPAAPQPSMSSEERKERWEQGQADYM. The interval 290–316 is disordered; the sequence is EAPAAPQPSMSSEERKERWEQGQADYM.

The protein belongs to the glycosyltransferase 8 family. Glycogenin subfamily. Part of the GYS1-GYG1 complex, a heterooctamer composed of a tetramer of GYS1 and 2 dimers of GYG1, where each GYS1 protomer binds to one GYG1 subunit (via GYG1 C-terminus); the GYS1 tetramer may dissociate from GYG1 dimers to continue glycogen polymerization on its own. May also form a heterooctamer complex with GYS2. Mn(2+) serves as cofactor. Post-translationally, self-glycosylated by the transfer of glucose residues from UDP-glucose to itself, forming an alpha-1,4-glycan of around 10 residues attached to Tyr-195. Phosphorylated. Skeletal muscle, heart, to a lesser extent in kidney, lung and brain.

The protein resides in the cytoplasm. The protein localises to the nucleus. It catalyses the reaction L-tyrosyl-[glycogenin] + UDP-alpha-D-glucose = alpha-D-glucosyl-L-tyrosyl-[glycogenin] + UDP + H(+). The enzyme catalyses [1,4-alpha-D-glucosyl](n)-L-tyrosyl-[glycogenin] + UDP-alpha-D-glucose = [1,4-alpha-D-glucosyl](n+1)-L-tyrosyl-[glycogenin] + UDP + H(+). Its pathway is glycan biosynthesis; glycogen biosynthesis. Its function is as follows. Glycogenin participates in the glycogen biosynthetic process along with glycogen synthase and glycogen branching enzyme. It catalyzes the formation of a short alpha (1,4)-glucosyl chain covalently attached via a glucose 1-O-tyrosyl linkage to internal tyrosine residues and these chains act as primers for the elongation reaction catalyzed by glycogen synthase. In Mus musculus (Mouse), this protein is Glycogenin-1.